Reading from the N-terminus, the 141-residue chain is Protein nfe1 (141 aa).

This sequence to the N-terminal of nitrogenase iron protein (NifH). Has lost the ATP-binding site.

Responsible for the nodulation efficiency and competitive ability of strain GR4 on alfalfa roots. This is Protein nfe1 (nfe1) from Rhizobium meliloti (Ensifer meliloti).